Reading from the N-terminus, the 50-residue chain is Photosystem I reaction center subunit IX (50 aa).

A helical membrane pass occupies residues Tyr-7 to Ile-27.

Belongs to the PsaJ family.

The protein localises to the plastid. It localises to the chloroplast thylakoid membrane. Functionally, may help in the organization of the PsaE and PsaF subunits. This Pinus koraiensis (Korean pine) protein is Photosystem I reaction center subunit IX.